The chain runs to 390 residues: Guanine nucleotide-binding protein alpha-7 subunit (390 aa).

Low complexity-rich tracts occupy residues 1 to 12 (MSSTTTNTTTAT) and 22 to 42 (SSSP…MSPS). The interval 1 to 42 (MSSTTTNTTTATPAIQVNGNQSSSPQSPSSSTSTLSPPMSPS) is disordered. In terms of domain architecture, G-alpha spans 70–390 (SELKLLLLGT…TRQTMEEGGI (321 aa)). The G1 motif stretch occupies residues 73-86 (KLLLLGTGDSGKST). GTP contacts are provided by residues 78 to 85 (GTGDSGKS), 213 to 219 (LYTRVAS), 238 to 242 (DVAGQ), 307 to 310 (NKRD), and A363. Position 85 (S85) interacts with Mg(2+). The G2 motif stretch occupies residues 211 to 219 (DILYTRVAS). The G3 motif stretch occupies residues 234-243 (FRMIDVAGQR). The tract at residues 303 to 310 (ILFLNKRD) is G4 motif. The G5 motif stretch occupies residues 361–366 (TTATDT).

It belongs to the G-alpha family. As to quaternary structure, g proteins are composed of 3 units; alpha, beta and gamma. The alpha chain contains the guanine nucleotide binding site.

Its function is as follows. Guanine nucleotide-binding proteins (G proteins) are involved as modulators or transducers in various transmembrane signaling systems. The protein is Guanine nucleotide-binding protein alpha-7 subunit (gpaG) of Dictyostelium discoideum (Social amoeba).